Consider the following 316-residue polypeptide: DMOA farnesyltransferase nvfB (316 aa).

A run of 9 helical transmembrane segments spans residues 47–67 (VVGVVFGAAVAPTKLPATILL), 71–91 (LILVLWSLFLRSAGCVWNDVI), 115–135 (WNAVMLTAGIFACGGSLLSFL), 139–159 (CAIEALIEIFFALLYPFGKRF), 162–182 (FPQLILVNIGWAIPMSMHSLG), 191–211 (PTFFMFLFIALVIVMIDVVYS), 234–254 (IELLSYAFFYASTGALLAAGY), 258–278 (LGIPFTVLSVGGHFGGFLYFL), and 294–314 (KLACLIASLFWVVGLFVEYYL).

The protein belongs to the UbiA prenyltransferase family.

It localises to the membrane. It carries out the reaction 3,5-dimethylorsellinate + (2E,6E)-farnesyl diphosphate = (3R)-3-farnesyl-6-hydroxy-2,3,5-trimethyl-4-oxocyclohexa-1,5-diene-1-carboxylate + diphosphate + H(+). It functions in the pathway secondary metabolite biosynthesis; terpenoid biosynthesis. DMOA farnesyltransferase; part of the gene cluster that mediates the biosynthesis of novofumigatonin, a heavily oxygenated meroterpenoid containing a unique orthoester moiety. The first step of the pathway is the synthesis of 3,5-dimethylorsellinic acid (DMOA) by the polyketide synthase nvfA via condensation of one acetyl-CoA starter unit with 3 malonyl-CoA units and 2 methylations. DMOA is then converted to farnesyl-DMOA by the farnesyltransferase nvfB. Epoxydation by FAD-dependent monooxygenase nvfK, followed by a protonation-initiated cyclization catalyzed by the terpene cyclase nvfL leads to the production of asnavolin H. The short chain dehydrogenase nvfC then as a 3-OH dehydrogenase of asnovolin H to yield chemesin D. There are two branches to synthesize asnovolin A from chemesin D. In one branch, chemesin D undergoes Baeyer-Villiger oxidation by nvfH, methylation by nvfJ, and enoyl reduction by the nvfM D enoylreductase that reduces the double bond between C-5'and C-6', to form respectively asnovolin I, asnovolin K, and asnovolin A. In the other branch, the methylation precedes the Baeyer-Villiger oxidation and the enoyl reduction to yield asnovolin A via the asnovolin J intermediate. Asnovolin A is further converted to fumigatonoid A by the Fe(II)/2-oxoglutarate-dependent dioxygenase nvfI that catalyzes an endoperoxidation reaction. The alpha/beta hydrolase nvfD then acts as an epimerase that converts fumigatonoid A to its C-5' epimer, which then undergoes spontaneous or nvfD-catalyzed lactonization. The following step utilizes the ketoreductase nvfG to produce fumigatonoid B. The dioxygenase nvfE further converts fumigatonoid B into fumigatonoid C. Finally the Fe(II)/2-oxoglutarate-dependent dioxygenase nvfF catalyzes two rounds of oxidation to transform fumigatonoid C into the end product, novofumigatonin A. This chain is DMOA farnesyltransferase nvfB, found in Aspergillus novofumigatus (strain IBT 16806).